The chain runs to 105 residues: MLRVFGHGTVGGAFPLPILTVNVLGSFLMGVFVVAAAHRGLTHLSPLVMTGLLGGFTTFSAFSLETVTLYERGDVGQAALYVALSVGLSIAGLMAGLWLARGVFA.

Transmembrane regions (helical) follow at residues 14–34, 44–64, and 79–99; these read FPLP…VFVV, LSPL…AFSL, and ALYV…GLWL. Positions 54 and 57 each coordinate Na(+).

Belongs to the fluoride channel Fluc/FEX (TC 1.A.43) family.

It is found in the cell inner membrane. The enzyme catalyses fluoride(in) = fluoride(out). Na(+) is not transported, but it plays an essential structural role and its presence is essential for fluoride channel function. Functionally, fluoride-specific ion channel. Important for reducing fluoride concentration in the cell, thus reducing its toxicity. The sequence is that of Fluoride-specific ion channel FluC from Jannaschia sp. (strain CCS1).